A 177-amino-acid chain; its full sequence is Probasin (177 aa).

The signal sequence occupies residues 1–17 (MRVILLLLTLDVLGVSS). An intrachain disulfide couples C79 to C170.

It belongs to the calycin superfamily. Lipocalin family. Prostatic epithelial cells.

It is found in the nucleus. It localises to the secreted. This is Probasin (Pbsn) from Rattus norvegicus (Rat).